Consider the following 226-residue polypeptide: Cold-regulated 413 inner membrane protein 2, chloroplastic (226 aa).

The transit peptide at 1–76 directs the protein to the chloroplast; sequence MASLCLSSSR…RKRGSSVVCY (76 aa). At 77–79 the chain is on the stromal side; that stretch reads ATP. Residues 80-100 traverse the membrane as a helical segment; it reads MLSVHNLQWISTISCVALMFA. The Chloroplast intermembrane portion of the chain corresponds to 101–103; the sequence is RGT. Residues 104-124 form a helical membrane-spanning segment; that stretch reads GIHKSFVVPLFALQAPMGIVS. The Stromal portion of the chain corresponds to 125–129; that stretch reads WMKGE. Residues 130–150 traverse the membrane as a helical segment; the sequence is YGIWAAFLALLTRLFFSFPVE. Over 151–152 the chain is Chloroplast intermembrane; the sequence is LE. Residues 153–173 traverse the membrane as a helical segment; the sequence is LPFIALLLVIVAPYQVMSIRG. The Stromal segment spans residues 174-176; the sequence is KQE. A helical transmembrane segment spans residues 177-197; it reads GAILSLAISCFLAFQHFSRAG. Over 198-205 the chain is Chloroplast intermembrane; that stretch reads TLQKAFDQ. Residues 206 to 226 form a helical membrane-spanning segment; sequence NSVLATVAIIGVTVVSFLFLI.

Belongs to the Cold-regulated 413 protein family.

It localises to the plastid. It is found in the chloroplast inner membrane. The sequence is that of Cold-regulated 413 inner membrane protein 2, chloroplastic (COR413IM2) from Arabidopsis thaliana (Mouse-ear cress).